A 195-amino-acid chain; its full sequence is Cysteine/O-acetylserine efflux protein (195 aa).

Topologically, residues 1 to 7 are periplasmic; sequence MTPTLLS. A helical membrane pass occupies residues 8 to 28; sequence AFWTYTLITAMTPGPNNILAL. Over 29-46 the chain is Cytoplasmic; it reads SSATSHGFRQSTRVLAGM. A helical membrane pass occupies residues 47–67; that stretch reads SLGFLIVMLLCAGISFSLAVI. The Periplasmic segment spans residues 68 to 69; it reads DP. Residues 70–90 form a helical membrane-spanning segment; the sequence is AAVHLLSWAGAAYIVWLAWKI. Topologically, residues 91 to 104 are cytoplasmic; that stretch reads ATSPTKEDGLQAKP. A helical transmembrane segment spans residues 105–125; the sequence is ISFWASFALQFVNVKIILYGV. Residues 126–141 lie on the Periplasmic side of the membrane; it reads TALSTFVLPQTQALSW. A helical membrane pass occupies residues 142-162; it reads VVGVSVLLAMIGTFGNVCWAL. Topologically, residues 163–176 are cytoplasmic; sequence AGHLFQRLFRQYGR. Residues 177–194 traverse the membrane as a helical segment; sequence QLNIVLALLLIYCAVRIF. A topological domain (periplasmic) is located at residue Tyr195.

It belongs to the Rht family.

The protein localises to the cell inner membrane. The enzyme catalyses O-acetyl-L-serine(in) = O-acetyl-L-serine(out). The catalysed reaction is L-cysteine(in) = L-cysteine(out). Functionally, exporter of O-acetylserine (OAS) and cysteine. This chain is Cysteine/O-acetylserine efflux protein (eamB), found in Escherichia coli O139:H28 (strain E24377A / ETEC).